The chain runs to 1342 residues: DNA-directed RNA polymerase subunit beta (1342 aa).

The protein belongs to the RNA polymerase beta chain family. As to quaternary structure, the RNAP catalytic core consists of 2 alpha, 1 beta, 1 beta' and 1 omega subunit. When a sigma factor is associated with the core the holoenzyme is formed, which can initiate transcription.

It catalyses the reaction RNA(n) + a ribonucleoside 5'-triphosphate = RNA(n+1) + diphosphate. DNA-dependent RNA polymerase catalyzes the transcription of DNA into RNA using the four ribonucleoside triphosphates as substrates. The chain is DNA-directed RNA polymerase subunit beta from Glaesserella parasuis serovar 5 (strain SH0165) (Haemophilus parasuis).